The following is a 225-amino-acid chain: Insulin-induced gene 2 protein (225 aa).

Residues 1–28 (MAEGETKSPGPKKCGPYISSVTSQSVNL) lie on the Cytoplasmic side of the membrane. The chain crosses the membrane as a helical span at residues 29–51 (MIRGVVLFFIGVFLALVLNLLQI). The Lumenal portion of the chain corresponds to 52–70 (QRNVTLFPPDVIASIFSSA). A helical transmembrane segment spans residues 71-88 (WWVPPCCGTASAVIGLLY). At 89 to 103 (PCIDRHLGEPHKFKR) the chain is on the cytoplasmic side. The chain crosses the membrane as a helical span at residues 104-126 (EWSSVMRCVAVFVGINHASAKVD). Topologically, residues 127-129 (FDN) are lumenal. The helical transmembrane segment at 130–148 (NIQLSLTLAALSIGLWWTF) threads the bilayer. The Cytoplasmic portion of the chain corresponds to 149 to 153 (DRSRS). Ser-151 carries the post-translational modification Phosphoserine. The chain crosses the membrane as a helical span at residues 154-175 (GFGLGVGIAFLATVVTQLLVYN). Residues 176 to 189 (GVYQYTSPDFLYVR) are Lumenal-facing. Residues 190–207 (SWLPCIFFAGGITMGNIG) form a helical membrane-spanning segment. The Cytoplasmic portion of the chain corresponds to 208–225 (RQLAMYECKVIAEKSHQE). Cysteine sulfenic acid (-SOH); alternate is present on Cys-215. Residue Cys-215 forms a Glycyl cysteine thioester (Cys-Gly) (interchain with G-Cter in ubiquitin); alternate linkage. Positions 219-225 (AEKSHQE) match the KxHxx motif.

It belongs to the INSIG family. Interacts with SCAP; interaction is direct and only takes place in the presence of sterols; it prevents interaction between SCAP and the coat protein complex II (COPII). Associates with the SCAP-SREBP complex (composed of SCAP and SREBF1/SREBP1 or SREBF2/SREBP2); association is mediated via its interaction with SCAP and only takes place in the presence of sterols. Interacts with RNF139. Interacts with RNF145. Phosphorylation at Ser-151 by PCK1 reduces binding to oxysterol, disrupting the interaction between INSIG2 and SCAP, thereby promoting nuclear translocation of SREBP proteins (SREBF1/SREBP1 or SREBF2/SREBP2) and subsequent transcription of downstream lipogenesis-related genes. Post-translationally, polyubiquitinated by AMFR/gp78 at Cys-215 in some tissues such as adipose tissues, undifferentiated myoblasts and liver, leading to its degradation. In differentiated myotubes, Cys-215 oxidation prevents ubiquitination at the same site, resulting in protein stabilization. In terms of processing, oxidized at Cys-215 in differentiated myotubes, preventing ubiquitination at the same site, and resulting in protein stabilization.

It is found in the endoplasmic reticulum membrane. In terms of biological role, oxysterol-binding protein that mediates feedback control of cholesterol synthesis by controlling both endoplasmic reticulum to Golgi transport of SCAP and degradation of HMGCR. Acts as a negative regulator of cholesterol biosynthesis by mediating the retention of the SCAP-SREBP complex in the endoplasmic reticulum, thereby blocking the processing of sterol regulatory element-binding proteins (SREBPs) SREBF1/SREBP1 and SREBF2/SREBP2. Binds oxysterol, including 22-hydroxycholesterol, 24-hydroxycholesterol, 25-hydroxycholesterol and 27-hydroxycholesterol, regulating interaction with SCAP and retention of the SCAP-SREBP complex in the endoplasmic reticulum. In presence of oxysterol, interacts with SCAP, retaining the SCAP-SREBP complex in the endoplasmic reticulum, thereby preventing SCAP from escorting SREBF1/SREBP1 and SREBF2/SREBP2 to the Golgi. Sterol deprivation or phosphorylation by PCK1 reduce oxysterol-binding, disrupting the interaction between INSIG2 and SCAP, thereby promoting Golgi transport of the SCAP-SREBP complex, followed by processing and nuclear translocation of SREBF1/SREBP1 and SREBF2/SREBP2. Also regulates cholesterol synthesis by regulating degradation of HMGCR: initiates the sterol-mediated ubiquitin-mediated endoplasmic reticulum-associated degradation (ERAD) of HMGCR via recruitment of the reductase to the ubiquitin ligase RNF139. The polypeptide is Insulin-induced gene 2 protein (Pongo abelii (Sumatran orangutan)).